The chain runs to 102 residues: uncharacterized protein (102 aa).

The segment at 1 to 102 is disordered; it reads MPVEQDGLTG…LANIREQNHQ (102 aa).

This is an uncharacterized protein from Caenorhabditis elegans.